A 431-amino-acid chain; its full sequence is Peptidase B (431 aa).

Lys-196 and Asp-201 together coordinate Mn(2+). Lys-208 is an active-site residue. Mn(2+)-binding residues include Asp-219, Asp-278, and Glu-280. Residue Arg-282 is part of the active site.

It belongs to the peptidase M17 family. Homohexamer. The cofactor is Mn(2+).

The protein localises to the cytoplasm. The catalysed reaction is Release of an N-terminal amino acid, Xaa, from a peptide or arylamide. Xaa is preferably Glu or Asp but may be other amino acids, including Leu, Met, His, Cys and Gln.. Functionally, probably plays an important role in intracellular peptide degradation. This Serratia proteamaculans (strain 568) protein is Peptidase B.